The following is a 532-amino-acid chain: Telomerase Cajal body protein 1 (532 aa).

The disordered stretch occupies residues 1-53 (MKTSEERLLAPDSLPPDLAPAPVPQGSPAEKNTDFEPVPPPCGGDDQPQLATD). Positions 13–25 (SLPPDLAPAPVPQ) are enriched in pro residues. S27, S61, and S83 each carry phosphoserine. Positions 80–122 (SELSPGIEEQDVSEHASLPGEETNLPELESGEATEGVSEERAE) are disordered. WD repeat units follow at residues 151–190 (RSEN…YSEQ), 206–251 (EGDT…LRAS), 256–297 (NHLD…RDCE), 307–348 (GQSG…ALLG), 349–389 (GHQG…HLLW), and 395–434 (VTTN…SDDS). A Phosphothreonine modification is found at T474. At S476 the chain carries Phosphoserine. The segment at 510–532 (DPSSPVDDQDEKGQRRTEAVGMS) is disordered. Positions 520–532 (EKGQRRTEAVGMS) are enriched in basic and acidic residues.

Belongs to the TCAB1 family. In terms of assembly, component of the telomerase holoenzyme complex composed of one molecule of TERT, one molecule of WRAP53/TCAB1, two molecules of H/ACA ribonucleoprotein complex subunits DKC1, NOP10, NHP2 and GAR1, and a telomerase RNA template component (TERC). The telomerase holoenzyme complex is associated with TEP1, SMG6/EST1A and POT1. Interacts with the chaperonin-containing T-complex (TRiC) complex; which mediates the folding of WRAP53/TCAB1. Interacts with COIL. Interacts with SMN1. Interacts with RNF8. Interacts with histone H2AX. Post-translationally, phosphorylated at Ser-61 by ATM in response to DNA damage, promoting its interaction with histone H2AX and localization to sites of DNA double-strand breaks.

Its subcellular location is the nucleus. It localises to the cajal body. The protein resides in the chromosome. The protein localises to the telomere. RNA chaperone that plays a key role in telomere maintenance and RNA localization to Cajal bodies. Specifically recognizes and binds the Cajal body box (CAB box) present in both small Cajal body RNAs (scaRNAs) and telomerase RNA template component (TERC). Essential component of the telomerase holoenzyme complex, a ribonucleoprotein complex essential for the replication of chromosome termini that elongates telomeres in most eukaryotes. In the telomerase holoenzyme complex, required to stimulate the catalytic activity of the complex. Acts by specifically binding the CAB box of the TERC RNA and controlling the folding of the CR4/CR5 region of the TERC RNA, a critical step for telomerase activity. In addition, also controls telomerase holoenzyme complex localization to Cajal body. During S phase, required for delivery of TERC to telomeres during S phase and for telomerase activity. In addition to its role in telomere maintenance, also required for Cajal body formation, probably by mediating localization of scaRNAs to Cajal bodies. Also plays a role in DNA repair: phosphorylated by ATM in response to DNA damage and relocalizes to sites of DNA double-strand breaks to promote the repair of DNA double-strand breaks. Acts by recruiting the ubiquitin ligase RNF8 to DNA breaks and promote both homologous recombination (HR) and non-homologous end joining (NHEJ). This chain is Telomerase Cajal body protein 1, found in Mus musculus (Mouse).